Reading from the N-terminus, the 90-residue chain is RNA-binding protein Hfq (90 aa).

In terms of domain architecture, Sm spans 9-68; it reads DPFLNALRRERVPVSIYLVNGIKLQGQVESFDQFVILLKNTVSQMVYKHAISTVVPARPF.

It belongs to the Hfq family. Homohexamer.

Functionally, RNA chaperone that binds small regulatory RNA (sRNAs) and mRNAs to facilitate mRNA translational regulation in response to envelope stress, environmental stress and changes in metabolite concentrations. Also binds with high specificity to tRNAs. The chain is RNA-binding protein Hfq from Shewanella oneidensis (strain ATCC 700550 / JCM 31522 / CIP 106686 / LMG 19005 / NCIMB 14063 / MR-1).